A 302-amino-acid polypeptide reads, in one-letter code: tRNA dimethylallyltransferase (302 aa).

2–9 (GPTACGKS) contacts ATP. A substrate-binding site is contributed by 4 to 9 (TACGKS). 2 interaction with substrate tRNA regions span residues 27 to 30 (DSAL) and 149 to 153 (QRLIR).

It belongs to the IPP transferase family. Monomer. It depends on Mg(2+) as a cofactor.

It catalyses the reaction adenosine(37) in tRNA + dimethylallyl diphosphate = N(6)-dimethylallyladenosine(37) in tRNA + diphosphate. In terms of biological role, catalyzes the transfer of a dimethylallyl group onto the adenine at position 37 in tRNAs that read codons beginning with uridine, leading to the formation of N6-(dimethylallyl)adenosine (i(6)A). The chain is tRNA dimethylallyltransferase from Buchnera aphidicola subsp. Acyrthosiphon pisum (strain 5A).